Here is a 316-residue protein sequence, read N- to C-terminus: Putative metal-binding protein TP_0034 (316 aa).

Residues 1 to 19 (MQRCSVVAALAGVVFLAQA) form the signal peptide. Histidine 68, histidine 146, and histidine 210 together coordinate a divalent metal cation.

The protein belongs to the bacterial solute-binding protein 9 family.

It is found in the periplasm. Functionally, part of an ATP-binding cassette (ABC) transport system involved in metal import. Binds a metal with high affinity and specificity and delivers it to the membrane permease for translocation into the cytoplasm. This is Putative metal-binding protein TP_0034 from Treponema pallidum (strain Nichols).